The primary structure comprises 130 residues: Protein ApaG (130 aa).

In terms of domain architecture, ApaG spans 3–127 (RAVTRQIEVT…FSLDSPDNKR (125 aa)).

This is Protein ApaG from Bradyrhizobium diazoefficiens (strain JCM 10833 / BCRC 13528 / IAM 13628 / NBRC 14792 / USDA 110).